A 273-amino-acid polypeptide reads, in one-letter code: 2-dehydro-3-deoxyphosphooctonate aldolase (273 aa).

It belongs to the KdsA family.

The protein resides in the cytoplasm. It carries out the reaction D-arabinose 5-phosphate + phosphoenolpyruvate + H2O = 3-deoxy-alpha-D-manno-2-octulosonate-8-phosphate + phosphate. Its pathway is carbohydrate biosynthesis; 3-deoxy-D-manno-octulosonate biosynthesis; 3-deoxy-D-manno-octulosonate from D-ribulose 5-phosphate: step 2/3. It participates in bacterial outer membrane biogenesis; lipopolysaccharide biosynthesis. The polypeptide is 2-dehydro-3-deoxyphosphooctonate aldolase (Desulfatibacillum aliphaticivorans).